We begin with the raw amino-acid sequence, 341 residues long: Phenylalanine--tRNA ligase alpha subunit (341 aa).

Residue Glu259 participates in Mg(2+) binding.

The protein belongs to the class-II aminoacyl-tRNA synthetase family. Phe-tRNA synthetase alpha subunit type 1 subfamily. As to quaternary structure, tetramer of two alpha and two beta subunits. The cofactor is Mg(2+).

It localises to the cytoplasm. The enzyme catalyses tRNA(Phe) + L-phenylalanine + ATP = L-phenylalanyl-tRNA(Phe) + AMP + diphosphate + H(+). The polypeptide is Phenylalanine--tRNA ligase alpha subunit (Mycobacterium bovis (strain ATCC BAA-935 / AF2122/97)).